The primary structure comprises 872 residues: MNKWTGLSAAAVLESRAQHGANLIPTKKLTPFWLLFLEQFKSLVVILLLVATILSLVVAIISGVNANWLFDHNLVIEWTQPFVILITVLANSLIGSIQEFKAQKSAHTLKSLTQPFTRVFREEGLVSLPVGEVVVGDIIFLEAGDIIPADGKVLQANHLRCMESFLTGESVPVDKSVVNTGGKGLLEQTNLLFSGAQVVFGSGVFEVTAVGLNTQVGQIVKTVDSSATKLSPLQQKLEKVGKWFSWFGLGLFVVVFLVQLGLLGFHNFSANWSIALIGAIALVVAIIPEGLVTFINVIFALSVQKLTKQKAIIKYLAAIETLGGVQIICTDKTGTLTQNKMKVVDYFCFSNTTQTDLARALCLCNNATVNTNGDSTGDPTEIALLQWLDRDGLELNHYTRVYEKAFDSNRKLMSVVVQKDNRFIVIVKGAHDVLLPLCKGLDSNQIKPLIDERASNGLRNLAVGLKVLYCFDPENTQTVNELESELDFLGSVSLQDPPRIESKAAIMACHQANITPIMITGDHLKTATAIAKELGILTDERQAILGVDLDPAKIMEYRVFARVTPQQKLEIVNAWKQAGYTVAVTGDGVNDAPALVTSDVGCCMGQTGVDIAKDAADVIISDDNFATIVNGIEQGRKTFLTCKRVLFNLFLTSIAGTIVVLLGLFVLGEVFREQLSKANHNFQVFTPTQLLIINLFVHGFPAVALAIQPVQEKLMLKPFSTKNLFYNRGGFDLIWQSLLLSFLTLLFYSLGMVYAINDPELGKSGDLINRAGATCGFMVLGGSAALNSLNLMVDRPLVATNPKHYGIVWLGALSSIFVFLLIIFINPLGLVFSTLKDLTAHPVLIGYSFGGVLLYMTINEVVKLIRLSYGSV.

The Cytoplasmic portion of the chain corresponds to 1–41 (MNKWTGLSAAAVLESRAQHGANLIPTKKLTPFWLLFLEQFK). A helical membrane pass occupies residues 42–62 (SLVVILLLVATILSLVVAIIS). At 63-79 (GVNANWLFDHNLVIEWT) the chain is on the extracellular side. The chain crosses the membrane as a helical span at residues 80 to 100 (QPFVILITVLANSLIGSIQEF). The Cytoplasmic segment spans residues 101–237 (KAQKSAHTLK…TKLSPLQQKL (137 aa)). Residues 238–257 (EKVGKWFSWFGLGLFVVVFL) form a helical membrane-spanning segment. The Extracellular portion of the chain corresponds to 258 to 275 (VQLGLLGFHNFSANWSIA). A helical transmembrane segment spans residues 276-293 (LIGAIALVVAIIPEGLVT). At 294–642 (FINVIFALSV…EQGRKTFLTC (349 aa)) the chain is on the cytoplasmic side. Asp-331 acts as the 4-aspartylphosphate intermediate in catalysis. Residues Asp-587 and Asp-591 each coordinate Mg(2+). A helical transmembrane segment spans residues 643–662 (KRVLFNLFLTSIAGTIVVLL). Residues 663 to 685 (GLFVLGEVFREQLSKANHNFQVF) lie on the Extracellular side of the membrane. A helical membrane pass occupies residues 686-706 (TPTQLLIINLFVHGFPAVALA). Residues 707–724 (IQPVQEKLMLKPFSTKNL) lie on the Cytoplasmic side of the membrane. A helical membrane pass occupies residues 725-747 (FYNRGGFDLIWQSLLLSFLTLLF). The Extracellular portion of the chain corresponds to 748–768 (YSLGMVYAINDPELGKSGDLI). The chain crosses the membrane as a helical span at residues 769-788 (NRAGATCGFMVLGGSAALNS). At 789–801 (LNLMVDRPLVATN) the chain is on the cytoplasmic side. The helical transmembrane segment at 802–824 (PKHYGIVWLGALSSIFVFLLIIF) threads the bilayer. The Extracellular portion of the chain corresponds to 825–842 (INPLGLVFSTLKDLTAHP). Residues 843–863 (VLIGYSFGGVLLYMTINEVVK) traverse the membrane as a helical segment. Over 864-872 (LIRLSYGSV) the chain is Cytoplasmic.

This sequence belongs to the cation transport ATPase (P-type) (TC 3.A.3) family. Type II subfamily.

The protein localises to the cell membrane. It carries out the reaction ATP + H2O = ADP + phosphate + H(+). Its function is as follows. Could mediate calcium influx. This chain is Probable cation-transporting P-type ATPase (pacL), found in Mycoplasma pneumoniae (strain ATCC 29342 / M129 / Subtype 1) (Mycoplasmoides pneumoniae).